The primary structure comprises 418 residues: Ceramide synthase LAC1 (418 aa).

Residues 1-14 (MSTIKPSPSNNNLK) are compositionally biased toward polar residues. The disordered stretch occupies residues 1–25 (MSTIKPSPSNNNLKVRSRPRRKSSI). Serine 2 is subject to N-acetylserine. The Cytoplasmic segment spans residues 2 to 81 (STIKPSPSNN…WFSFREISYR (80 aa)). Over residues 15–24 (VRSRPRRKSS) the composition is skewed to basic residues. Residues serine 23 and serine 24 each carry the phosphoserine modification. Residues 82 to 102 (HAWIAPLMILIAVYSAYFTSG) traverse the membrane as a helical segment. An N-linked (GlcNAc...) asparagine glycan is attached at asparagine 103. Residues 103–130 (NTTKTNVLHRFVAVSYQIGDTNAYGKGI) are Lumenal-facing. The chain crosses the membrane as a helical span at residues 131–155 (NDLCFVFYYMIFFTFLREFLMDVVI). Topologically, residues 156-172 (RPFAIRLHVTSKHRIKR) are cytoplasmic. Residues 168-385 (HRIKRIMEQM…FRVLYRILWR (218 aa)) form the TLC domain. Positions 169, 172, and 182 each coordinate fumonisin B1. Residues 173 to 194 (IMEQMYAIFYTGVSGPFGIYCM) form a helical membrane-spanning segment. Residues 195-217 (YHSDLWFFNTKAMYRTYPDFTNP) lie on the Lumenal side of the membrane. Residues 218–240 (FLFKVFYLGQAAFWAQQACILVL) form a helical membrane-spanning segment. Positions 224 and 231 each coordinate hexacosanoate. Tryptophan 231 contacts fumonisin B1. Residue tryptophan 231 coordinates hexacosanoyl-CoA. The Cytoplasmic portion of the chain corresponds to 241–249 (QLEKPRKDH). A helical transmembrane segment spans residues 250–268 (NELTFHHIVTLLLIWSSYV). Histidine 255 is a fumonisin B1 binding site. Positions 255, 259, 262, 263, 265, 266, 269, 271, 274, 275, 278, 279, 282, 283, and 286 each coordinate hexacosanoate. Residues histidine 255, threonine 259, and leucine 262 each contribute to the hexacosanoyl-CoA site. Residues serine 265 and serine 266 each coordinate hexacosanoyl-CoA. The Lumenal portion of the chain corresponds to 269–273 (FHFTK). 6 residues coordinate hexacosanoyl-CoA: phenylalanine 271, methionine 274, glycine 275, isoleucine 278, tyrosine 279, and methionine 282. The chain crosses the membrane as a helical span at residues 274 to 295 (MGLPIYITMDVSDFLLSFSKTL). Positions 286, 289, 293, 296, 297, 303, 304, 307, and 314 each coordinate fumonisin B1. Hexacosanoyl-CoA is bound by residues aspartate 286, leucine 289, lysine 293, and asparagine 296. The Cytoplasmic portion of the chain corresponds to 296-305 (NYLDSGLAFF). The chain crosses the membrane as a helical span at residues 306–334 (SFAIFVVAWIYLRHYINLKILWSVLTQFR). Phenylalanine 307 serves as a coordination point for hexacosanoyl-CoA. Arginine 318, phenylalanine 343, tyrosine 348, isoleucine 352, serine 353, isoleucine 356, valine 357, leucine 360, isoleucine 361, and tryptophan 371 together coordinate hexacosanoate. Arginine 318 provides a ligand contact to hexacosanoyl-CoA. Topologically, residues 335–353 (TEGNYVLNFATQQYKCWIS) are lumenal. Positions 348, 352, 353, 356, 357, and 360 each coordinate hexacosanoyl-CoA. A helical transmembrane segment spans residues 354 to 382 (LPIVFVLIGALQLVNLYWLFLIFRVLYRI). Fumonisin B1 is bound by residues tryptophan 371, isoleucine 375, valine 378, isoleucine 382, and arginine 385. Residue tryptophan 371 coordinates hexacosanoyl-CoA. Topologically, residues 383–418 (LWRGILKDDRSDSESDEESDESSTTPTDSTPTKKDI) are cytoplasmic. Residues 390-418 (DDRSDSESDEESDESSTTPTDSTPTKKDI) form a disordered region.

Belongs to the sphingosine N-acyltransferase family. As to quaternary structure, component of the ceramide synthase complex composed of at least LAC1, LAG1 and LIP1. Forms a heterotetrameric complex, where one unit of the LIP1 homodimer interacts with LAC1 and the other with either LAC1 or LAG1. Phosphorylated; phosphorylation is induced upon disruption of sphingolipid synthesis. Phosphorylation is inhibited by exogenous addition of phytosphingosine.

The protein localises to the endoplasmic reticulum membrane. It carries out the reaction a very long-chain fatty acyl-CoA + a sphingoid base = an N-(very-long-chain fatty acyl)-sphingoid base + CoA + H(+). It catalyses the reaction hexacosanoyl-CoA + sphinganine = N-hexacosanoylsphinganine + CoA + H(+). The catalysed reaction is eicosanoyl-CoA + sphinganine = N-eicosanoylsphinganine + CoA + H(+). The enzyme catalyses a fatty acyl-CoA + sphinganine = an N-acylsphinganine + CoA + H(+). It carries out the reaction (4R)-hydroxysphinganine + a fatty acyl-CoA = an N-acyl-(4R)-4-hydroxysphinganine + CoA + H(+). It functions in the pathway lipid metabolism; sphingolipid metabolism. As part of the ceramide synthase complex, inhibited by the sphinganine analog mycotoxin, fumonisin B1 (FB1). Activated by ACB1, as part of the ceramide synthase complex. Its function is as follows. Component of the ceramide synthase complex that catalyzes the transfer of the acyl chain from acyl-CoA to a sphingoid base, with high selectivity toward hexacosanoyl-CoA (C26:0-CoA). N-acylates sphinganine and phytosphingosine bases to form dihydroceramides and phytoceramides, respectively. Redundant with LAG1. Facilitates ER-to-Golgi transport of GPI-anchored proteins. Has a lower affinity for phytosphingosine (PHS) than dihydrosphingosine (DHS); PHS is required for the synthesis of phytoceramides and the formation of nuclear envelopes. Along with LAG1, plays a role in pheromone-induced MAP kinase-activation of mating and formation of diploid cells. May also play a role, together with LAG1, in the polarized membrane distribution of phosphatidylinositol 4,5 biphosphate required for STE5 localization to the plasma membrane. The sequence is that of Ceramide synthase LAC1 (LAC1) from Saccharomyces cerevisiae (strain ATCC 204508 / S288c) (Baker's yeast).